The following is a 244-amino-acid chain: Small ribosomal subunit protein eS4 (244 aa).

The S4 RNA-binding domain maps to 43–108 (LPLLLIVRDI…NYRVLFDRKG (66 aa)).

The protein belongs to the eukaryotic ribosomal protein eS4 family.

This chain is Small ribosomal subunit protein eS4 (rps4e), found in Methanocaldococcus jannaschii (strain ATCC 43067 / DSM 2661 / JAL-1 / JCM 10045 / NBRC 100440) (Methanococcus jannaschii).